Reading from the N-terminus, the 513-residue chain is MQLNSTEISELIKKRIAQFDVVSEAQSTGTIVSVSDGIIRIHGLADVMQGEMIELPGNRYAIALNLERDSVGAVVMGPYADLAEGMSVKCTGRILEVPVGRGLLGRVVNTLGQPIDGKGEIDNDGFSPVEVIAPGVIDRQSVDQPVQTGYKAVDSMVPIGRGQRELIIGDRQTGKTALAIDAIIAQKDSGIKCIYVAIGQKASTIANVVRKLEEHGALANTIVVVASASESAALQYLAPYSGCAMGEYFRDRGEDALIVYDDLSKQAVAYRQISLLLRRPPGREAFPGDVFYLHSRLLERAARVSADYVERFTNGAVKGQTGSLTALPIIETQAGDVSAFVPTNVISITDGQIFLESSLFNSGIRPAVNPGISVSRVGSAAQTKAIKKLSGGIRTALAQYRELAAFAQFASDLDDATRKQLSHGQKVTELLKQKQFAPMPVSEQALVLFAAEFGYLDDVELERIGSFESALLAYANSNHTDFMKNLAKSGDYNDSIKDQLKTIVEDFKKNGAW.

Position 169 to 176 (169 to 176 (GDRQTGKT)) interacts with ATP.

It belongs to the ATPase alpha/beta chains family. In terms of assembly, F-type ATPases have 2 components, CF(1) - the catalytic core - and CF(0) - the membrane proton channel. CF(1) has five subunits: alpha(3), beta(3), gamma(1), delta(1), epsilon(1). CF(0) has three main subunits: a(1), b(2) and c(9-12). The alpha and beta chains form an alternating ring which encloses part of the gamma chain. CF(1) is attached to CF(0) by a central stalk formed by the gamma and epsilon chains, while a peripheral stalk is formed by the delta and b chains.

The protein resides in the cell inner membrane. It catalyses the reaction ATP + H2O + 4 H(+)(in) = ADP + phosphate + 5 H(+)(out). Its function is as follows. Produces ATP from ADP in the presence of a proton gradient across the membrane. The alpha chain is a regulatory subunit. In Actinobacillus pleuropneumoniae serotype 3 (strain JL03), this protein is ATP synthase subunit alpha.